We begin with the raw amino-acid sequence, 297 residues long: 4-hydroxy-tetrahydrodipicolinate synthase (297 aa).

Threonine 46 serves as a coordination point for pyruvate. Tyrosine 136 acts as the Proton donor/acceptor in catalysis. The active-site Schiff-base intermediate with substrate is lysine 165. Threonine 206 serves as a coordination point for pyruvate.

Belongs to the DapA family. In terms of assembly, homotetramer; dimer of dimers.

The protein localises to the cytoplasm. The enzyme catalyses L-aspartate 4-semialdehyde + pyruvate = (2S,4S)-4-hydroxy-2,3,4,5-tetrahydrodipicolinate + H2O + H(+). It participates in amino-acid biosynthesis; L-lysine biosynthesis via DAP pathway; (S)-tetrahydrodipicolinate from L-aspartate: step 3/4. Functionally, catalyzes the condensation of (S)-aspartate-beta-semialdehyde [(S)-ASA] and pyruvate to 4-hydroxy-tetrahydrodipicolinate (HTPA). The chain is 4-hydroxy-tetrahydrodipicolinate synthase from Sulfurimonas denitrificans (strain ATCC 33889 / DSM 1251) (Thiomicrospira denitrificans (strain ATCC 33889 / DSM 1251)).